The chain runs to 544 residues: ATP-dependent RNA helicase HAS1 (544 aa).

The segment covering 1–10 (MSSTKPPTTT) has biased composition (low complexity). A disordered region spans residues 1–59 (MSSTKPPTTTNKRKRTSNAHDEAPAKRVPEASSSKVTLDDSQPAPATSSDAVLGARSAP). Residues 18 to 29 (NAHDEAPAKRVP) are compositionally biased toward basic and acidic residues. Residues 31–50 (ASSSKVTLDDSQPAPATSSD) show a composition bias toward polar residues. A Q motif motif is present at residues 66–94 (VPFSTLNLSPPTTAAIERMGFETMTEVQA). Positions 97–273 (IPPLLAGKDV…RISLRPGPLY (177 aa)) constitute a Helicase ATP-binding domain. Position 110–117 (110–117 (ARTGSGKT)) interacts with ATP. The DEAD box motif lies at 220–223 (DEAD). A Helicase C-terminal domain is found at 287–456 (MLEQGYVVCE…DVQKQLESLI (170 aa)). Positions 299-315 (QRFMLLFTFLKKNLKKK) match the Bipartite nuclear localization signal motif. Residues 513 to 544 (GSVKAKKSRDEDESSDDDGQPKKAYYRNRGRK) form a disordered region.

The protein belongs to the DEAD box helicase family. DDX18/HAS1 subfamily. Associates in the nucleolus with the 60S and pre-60S ribosomal subunits.

It is found in the nucleus. It localises to the nucleolus. The catalysed reaction is ATP + H2O = ADP + phosphate + H(+). Functionally, ATP-dependent RNA helicase involved in 40S ribosomal subunit biogenesis. Required for the processing and cleavage of 35S pre-rRNA at sites A0, A1, and A2, leading to mature 18S rRNA. The protein is ATP-dependent RNA helicase HAS1 (HAS1) of Cryptococcus neoformans var. neoformans serotype D (strain JEC21 / ATCC MYA-565) (Filobasidiella neoformans).